Consider the following 177-residue polypeptide: MKTRIHVVQGDITKLAVDVIVNVTNPSLMGGGGVDGAIHRAAGPALLDACLKVRQQQGDCPTGHAVITLAGDLPAKAVVHTVGPVWRGGEQNEDQLLQDAYLNSLRLVAANSYTSVAFPAISTGVYGYPRAAAAEIAVKTVSEFITRHALPEQVYFVCYDEENAHLYERLLTQQGDE.

One can recognise a Macro domain in the interval 1–175 (MKTRIHVVQG…LYERLLTQQG (175 aa)). Residues 11 to 12 (DI), asparagine 25, 33 to 35 (GVD), and 122 to 126 (STGVY) each bind substrate. Aspartate 35 acts as the Proton acceptor in catalysis.

Belongs to the MacroD-type family. YmdB subfamily. Homodimer. Interacts with RNase III.

The catalysed reaction is 3''-O-acetyl-ADP-D-ribose + H2O = ADP-D-ribose + acetate + H(+). It carries out the reaction 2''-O-acetyl-ADP-D-ribose + H2O = ADP-D-ribose + acetate + H(+). Functionally, deacetylates O-acetyl-ADP ribose to yield ADP-ribose and free acetate. Down-regulates ribonuclease 3 (RNase III) activity. Acts by interacting directly with the region of the ribonuclease that is required for dimerization/activation. This chain is O-acetyl-ADP-ribose deacetylase, found in Shigella dysenteriae serotype 1 (strain Sd197).